The sequence spans 290 residues: MRPATKIYGLIGRAVDYSYSPLIHNTAFEQLSLPCRYTIFNITEEHLVADALKGARALGLAGFSVTIPYKKTVVPLLDSLSEEAKSIQAVNTIVNHEGTLVGHNTDIAGFASPLLPHARSIQGRPVAILGSGGASLAAIEAFRTLFMPSEITLFMRNPAKETRMTDPAIKRCALGDLRESGSESSALLRDAAVVINATPVGTLGRPDAHMSPVPAESNLLHQGQIIYDMVYNPLDTPLLLAARKAGAVTIPGMEMLLAQGAAAFRLWTNLEMPMDAVRSALLNEIGASAI.

Residues 18-20 and threonine 66 contribute to the shikimate site; that span reads SYS. Catalysis depends on lysine 70, which acts as the Proton acceptor. Glutamate 82 contacts NADP(+). Asparagine 91 and aspartate 106 together coordinate shikimate. NADP(+)-binding positions include 130–134 and methionine 229; that span reads GSGGA. Tyrosine 231 contacts shikimate. Residue glycine 252 coordinates NADP(+).

It belongs to the shikimate dehydrogenase family. In terms of assembly, homodimer.

The catalysed reaction is shikimate + NADP(+) = 3-dehydroshikimate + NADPH + H(+). Its pathway is metabolic intermediate biosynthesis; chorismate biosynthesis; chorismate from D-erythrose 4-phosphate and phosphoenolpyruvate: step 4/7. Involved in the biosynthesis of the chorismate, which leads to the biosynthesis of aromatic amino acids. Catalyzes the reversible NADPH linked reduction of 3-dehydroshikimate (DHSA) to yield shikimate (SA). This Chlorobium phaeovibrioides (strain DSM 265 / 1930) (Prosthecochloris vibrioformis (strain DSM 265)) protein is Shikimate dehydrogenase (NADP(+)).